The sequence spans 183 residues: NEDD8-conjugating enzyme Ubc12 (183 aa).

Met-1 bears the N-acetylmethionine mark. A disordered region spans residues 1–28; sequence MIKLFSLKQQKKEEESAGGTKGSSKKAS. The 145-residue stretch at 29–173 folds into the UBC core domain; the sequence is AAQLRIQKDI…VQRSMRGGYI (145 aa). The active-site Glycyl thioester intermediate is the Cys-111.

Belongs to the ubiquitin-conjugating enzyme family. UBC12 subfamily. Post-translationally, the acetylation of Met-1 increases affinity for DCUN1D1 by about 2 orders of magnitude and is crucial for NEDD8 transfer to cullins.

The enzyme catalyses [E1 NEDD8-activating enzyme]-S-[NEDD8 protein]-yl-L-cysteine + [E2 NEDD8-conjugating enzyme]-L-cysteine = [E1 NEDD8-activating enzyme]-L-cysteine + [E2 NEDD8-conjugating enzyme]-S-[NEDD8-protein]-yl-L-cysteine.. It participates in protein modification; protein neddylation. In terms of biological role, accepts the ubiquitin-like protein NEDD8 from the UBA3-NAE1 E1 complex and catalyzes its covalent attachment to other proteins. The specific interaction with the E3 ubiquitin ligase rbx1, but not rbx2, suggests that the rbx1-ube2m complex neddylates specific target proteins, such as cul1, cul2, cul3 and cul4. Involved in cell proliferation. This is NEDD8-conjugating enzyme Ubc12 (ube2m) from Xenopus laevis (African clawed frog).